We begin with the raw amino-acid sequence, 108 residues long: MLGKKLHVKKNDTVVVIAGKDRSKSGKVISIHPKKDGVIVEGVNVVKRHQKPRGSEQGGILEKEAPVHISNVMLLCGKCNKPVRTKTTVLEDGKKARCCVKCGESFDK.

The protein belongs to the universal ribosomal protein uL24 family. Part of the 50S ribosomal subunit.

Its function is as follows. One of two assembly initiator proteins, it binds directly to the 5'-end of the 23S rRNA, where it nucleates assembly of the 50S subunit. Functionally, one of the proteins that surrounds the polypeptide exit tunnel on the outside of the subunit. The polypeptide is Large ribosomal subunit protein uL24 (Citrifermentans bemidjiense (strain ATCC BAA-1014 / DSM 16622 / JCM 12645 / Bem) (Geobacter bemidjiensis)).